A 59-amino-acid chain; its full sequence is Large ribosomal subunit protein bL32 (59 aa).

The segment at 1 to 20 is disordered; the sequence is MAVQKNKPTRSKRGMRRSHD. The span at 7-19 shows a compositional bias: basic residues; the sequence is KPTRSKRGMRRSH.

This sequence belongs to the bacterial ribosomal protein bL32 family.

This chain is Large ribosomal subunit protein bL32, found in Wigglesworthia glossinidia brevipalpis.